The chain runs to 666 residues: L-aspartate N-monooxygenase (nitrosuccinate-forming) (666 aa).

Positions 645-666 (LPAYEDPGVRCPSDDRLTEVTA) are disordered. Over residues 656 to 666 (PSDDRLTEVTA) the composition is skewed to basic and acidic residues.

Belongs to the nitrosuccinic acid synthase family. The cofactor is FAD.

It catalyses the reaction L-aspartate + 3 NADPH + 3 O2 + 2 H(+) = 2-nitrobutanedioate + 3 NADP(+) + 4 H2O. The protein operates within antibiotic biosynthesis. Part of a gene cluster involved in the biosynthesis of cremeomycin, a light-sensitive o-diazoquinone with antibacterial and antiproliferative effects. Catalyzes the iterative oxidation of L-aspartic acid to nitrosuccinic acid (2-nitrobutanedioate) via N-hydroxyaspartic acid and nitrososuccinic acid. In Streptomyces cremeus, this protein is L-aspartate N-monooxygenase (nitrosuccinate-forming).